A 699-amino-acid chain; its full sequence is MVAFGKKLKERSIQEWQGYYINYKLMKKKVKQYSRQLEGGNLERRHVLKDFSRMLDNQIEKIALFMLEQQGLLASRLQTLRGSHDALQEQPDISHMSYLKEEYRAVGQDLLKLLFFVEMNAIGIRKILKKFDKRFGYRFTNYYVKTRANHPYSELQQVFRHVGLGAVVGAVSRNLHELQNNQGSYLSIYDQPVLPLQDPVVDSIRAAVDRLTRSTNFLHFMAQHALIMQEELPSPQDEEGEEEDGRYHFMSLLLNLVNTFLYMVNTYIIVPTADDYSMSLGAAATVCGVVIGAMAVAQLFSSVYFSAWSNRSYFKPLIFSSIVLFIGNLLYALAFDFNSIAVLLIGRLFCGLGSARAVNRRYISDCVPLKIRMQASAGFVSASALGMACGPALAGLLQIRFKIYKLTFNQDTLPGWVMAVAWLIYLVWLAISFREPAREPEEIPKTSEESNHSAVQDVNLEKGMKQPLLLTSEEIEEQGEDECDGSEEASEDSRTPANSILAAYRLLTPSVKVQLLIYFMLKYAMEILLSESSVITTYYFGWSTSSVAIFLFCLGLTVLPVNLVVGSYISNMFEDRQILLVSEIMVCVGILLSFHVVVPYTVPQYVCSGLIMFVSAEVLEGVNLSLLSRVMSSRLSRGTYNGGLLSTEAGTIARVIADATITVAGFFGRNMLLNVTLLPSLVICVLSIVATCFTYNSLY.

Residues valine 2–lysine 145 enclose the SPX domain. The next 6 helical transmembrane spans lie at phenylalanine 249–isoleucine 269, leucine 280–phenylalanine 300, leucine 317–phenylalanine 337, serine 339–valine 358, alanine 377–leucine 397, and leucine 413–phenylalanine 433. Positions isoleucine 475 to serine 490 are enriched in acidic residues. The interval isoleucine 475–arginine 494 is disordered. 5 consecutive transmembrane segments (helical) span residues leucine 515–isoleucine 535, serine 546–glycine 566, isoleucine 578–valine 598, valine 606–leucine 626, and methionine 671–threonine 691.

It belongs to the major facilitator superfamily.

Its subcellular location is the membrane. In Arabidopsis thaliana (Mouse-ear cress), this protein is SPX domain-containing membrane protein At4g22990.